The primary structure comprises 138 residues: Putative transcriptional regulatory protein NedR (138 aa).

The segment at 1–25 (MCWGRSWTFGRSSSKGWRPTSSASS) is disordered. Polar residues predominate over residues 9–25 (FGRSSSKGWRPTSSASS).

May serve as a transcriptional regulator. The chain is Putative transcriptional regulatory protein NedR (nedR) from Micromonospora viridifaciens.